Reading from the N-terminus, the 398-residue chain is Mitochondrial protein import protein mas5 (398 aa).

The 82-residue stretch at G7–M88 folds into the J domain. The segment at G139–K219 adopts a CR-type zinc-finger fold. F144–V146 contacts substrate. Zn(2+) contacts are provided by C152, C155, C166, C169, C192, C195, C207, and C210. 4 CXXCXGXG motif repeats span residues C152–G159, C166–G173, C192–G199, and C207–E214. Substrate-binding positions include M221 to F222 and V253 to F255. Positions F367–Q386 are disordered.

Belongs to the DnaJ family. In terms of assembly, homodimer. The cofactor is Zn(2+).

The protein localises to the cytoplasm. Its function is as follows. Probably involved in mitosomal protein import. The chain is Mitochondrial protein import protein mas5 (MAS5) from Encephalitozoon cuniculi (strain GB-M1) (Microsporidian parasite).